The primary structure comprises 452 residues: Phosphoglucosamine mutase (452 aa).

Ser101 acts as the Phosphoserine intermediate in catalysis. Residues Ser101, Asp241, Asp243, and Asp245 each coordinate Mg(2+). Ser101 is modified (phosphoserine).

This sequence belongs to the phosphohexose mutase family. Mg(2+) is required as a cofactor. Post-translationally, activated by phosphorylation.

It carries out the reaction alpha-D-glucosamine 1-phosphate = D-glucosamine 6-phosphate. Catalyzes the conversion of glucosamine-6-phosphate to glucosamine-1-phosphate. The protein is Phosphoglucosamine mutase of Lactococcus lactis subsp. cremoris (strain MG1363).